A 135-amino-acid polypeptide reads, in one-letter code: Beta/delta-urticatoxin-Ui2a (135 aa).

The first 18 residues, 1 to 18 (MGAIVLVAIMALVASSSA), serve as a signal peptide directing secretion. Positions 19-72 (FSDDEQNMMNAEGEKGIRSYSAADDVSDMIESLFVNSGNRNLVLMMLSGRPQPN) are excised as a propeptide. Intrachain disulfides connect cysteine 75-cysteine 92, cysteine 82-cysteine 97, cysteine 91-cysteine 105, cysteine 107-cysteine 121, cysteine 114-cysteine 126, and cysteine 120-cysteine 134.

Belongs to the urticatoxin-2 family. Expressed in trichomes, that are stiff epidermal hairs located on the surface of petioles and leaves.

It is found in the secreted. In terms of biological role, plant defense neurotoxin that causes pain and systemic symptoms in mammals via modulation of voltage-gated sodium channels (Nav). Potent modulator of human Nav1.5/SCN5A (EC(50)=55 nM), Nav1.6/SCN8A (EC(50)=0.86 nM), and Nav1.7/SCN9A (EC(50)=208 nM), where it shifts the activation threshold to more negative potentials and delays fast inactivation. Also shifts the voltage-dependence of steady-state fast inactivation of Nav1.6/SCN8A, but not that of Nav1.5/SCN5A or Nav1.7/SCN9A. On Nav1.7/SCN9A, principally acts by binding to extracellular loops of domain IV (Nav site 3). In vivo, intraplantar injection into mice causes numerous dose-dependent, immediate, and long-lasting spontaneous pain behaviors, while no swelling is observed in the injected paw. At the highest doses tested, systemic symptoms including hypokinesia and hypersalivation are observed. The sequence is that of Beta/delta-urticatoxin-Ui2a from Urtica incisa (Scrub nettle).